The sequence spans 70 residues: NAD(P)H-quinone oxidoreductase subunit L (70 aa).

Helical transmembrane passes span 2 to 22 and 39 to 59; these read IVPL…PVAL and TFMY…SPFV.

This sequence belongs to the complex I NdhL subunit family. As to quaternary structure, NDH-1 can be composed of about 15 different subunits; different subcomplexes with different compositions have been identified which probably have different functions.

It is found in the cellular thylakoid membrane. It carries out the reaction a plastoquinone + NADH + (n+1) H(+)(in) = a plastoquinol + NAD(+) + n H(+)(out). It catalyses the reaction a plastoquinone + NADPH + (n+1) H(+)(in) = a plastoquinol + NADP(+) + n H(+)(out). In terms of biological role, NDH-1 shuttles electrons from an unknown electron donor, via FMN and iron-sulfur (Fe-S) centers, to quinones in the respiratory and/or the photosynthetic chain. The immediate electron acceptor for the enzyme in this species is believed to be plastoquinone. Couples the redox reaction to proton translocation, and thus conserves the redox energy in a proton gradient. Cyanobacterial NDH-1 also plays a role in inorganic carbon-concentration. In Trichormus variabilis (strain ATCC 29413 / PCC 7937) (Anabaena variabilis), this protein is NAD(P)H-quinone oxidoreductase subunit L.